The following is a 311-amino-acid chain: 4-hydroxy-3-methylbut-2-enyl diphosphate reductase (311 aa).

Cys-14 contributes to the [4Fe-4S] cluster binding site. Residues His-43 and His-76 each coordinate (2E)-4-hydroxy-3-methylbut-2-enyl diphosphate. 2 residues coordinate dimethylallyl diphosphate: His-43 and His-76. The isopentenyl diphosphate site is built by His-43 and His-76. Cys-98 contributes to the [4Fe-4S] cluster binding site. Position 126 (His-126) interacts with (2E)-4-hydroxy-3-methylbut-2-enyl diphosphate. His-126 lines the dimethylallyl diphosphate pocket. His-126 lines the isopentenyl diphosphate pocket. Glu-128 (proton donor) is an active-site residue. Thr-166 provides a ligand contact to (2E)-4-hydroxy-3-methylbut-2-enyl diphosphate. Cys-196 lines the [4Fe-4S] cluster pocket. Residues Ser-224, Ser-225, Asn-226, and Ser-268 each contribute to the (2E)-4-hydroxy-3-methylbut-2-enyl diphosphate site. Ser-224, Ser-225, Asn-226, and Ser-268 together coordinate dimethylallyl diphosphate. Isopentenyl diphosphate-binding residues include Ser-224, Ser-225, Asn-226, and Ser-268.

This sequence belongs to the IspH family. It depends on [4Fe-4S] cluster as a cofactor.

The catalysed reaction is isopentenyl diphosphate + 2 oxidized [2Fe-2S]-[ferredoxin] + H2O = (2E)-4-hydroxy-3-methylbut-2-enyl diphosphate + 2 reduced [2Fe-2S]-[ferredoxin] + 2 H(+). It catalyses the reaction dimethylallyl diphosphate + 2 oxidized [2Fe-2S]-[ferredoxin] + H2O = (2E)-4-hydroxy-3-methylbut-2-enyl diphosphate + 2 reduced [2Fe-2S]-[ferredoxin] + 2 H(+). The protein operates within isoprenoid biosynthesis; dimethylallyl diphosphate biosynthesis; dimethylallyl diphosphate from (2E)-4-hydroxy-3-methylbutenyl diphosphate: step 1/1. Its pathway is isoprenoid biosynthesis; isopentenyl diphosphate biosynthesis via DXP pathway; isopentenyl diphosphate from 1-deoxy-D-xylulose 5-phosphate: step 6/6. Catalyzes the conversion of 1-hydroxy-2-methyl-2-(E)-butenyl 4-diphosphate (HMBPP) into a mixture of isopentenyl diphosphate (IPP) and dimethylallyl diphosphate (DMAPP). Acts in the terminal step of the DOXP/MEP pathway for isoprenoid precursor biosynthesis. The chain is 4-hydroxy-3-methylbut-2-enyl diphosphate reductase from Chromobacterium violaceum (strain ATCC 12472 / DSM 30191 / JCM 1249 / CCUG 213 / NBRC 12614 / NCIMB 9131 / NCTC 9757 / MK).